Here is a 493-residue protein sequence, read N- to C-terminus: Insulinoma-associated protein 2 (493 aa).

The span at 1 to 12 (MPRGFLVKRTKR) shows a compositional bias: basic residues. The interval 1-20 (MPRGFLVKRTKRSGSSYRAR) is SNAG domain. Positions 1-77 (MPRGFLVKRT…PGPSPARPAG (77 aa)) are disordered. The C2H2-type 1; atypical zinc-finger motif lies at 203–223 (FICQLCKHQYADPFALAQHRC). A C2H2-type 2 zinc finger spans residues 231–253 (YRCPECDKVFSCPANLASHRRWH). The disordered stretch occupies residues 248-310 (SHRRWHKPRP…SGDGQHRDSA (63 aa)). A compositionally biased stretch (pro residues) spans 267 to 276 (PHAPLTPPDP). Basic and acidic residues predominate over residues 283–294 (ENGRVPRTDDQH). C2H2-type zinc fingers lie at residues 354 to 376 (FVCPYCHKKFRRQAYLRKHLGTH), 398 to 420 (FACPLCGAHFPSADIREKHRLWH), and 452 to 475 (FSCKYCPSTFFSSPGLTRHINKCH).

Expressed in spleen, stomach, liver, kidney and testis. In the pancreas, expressed in islet cells, including insulin-producing beta-cells, but not in acinar cells (at protein level). In the brain, expressed in the neuronal cells of the cerebral cortex, the Purkinje cells of the cerebellum and the hippocampal region including CA1 and CA3 (at protein level).

It localises to the cytoplasm. The protein localises to the nucleus. Functionally, may function as a growth suppressor or tumor suppressor in liver cells and in certain neurons. This Mus musculus (Mouse) protein is Insulinoma-associated protein 2 (Insm2).